The sequence spans 200 residues: MPKIGMQSIRKQQLIQATLAVINEVGMQDASIALIARKAGVSNGIISHYFRDKNGLLEAAMRHIQYQLGFAVAMRLRILSDAEPKLRIQAIVDGNFDTSQTSETAMKTWLAFWASSMHQPNLHRLQKVNDRRLYSNLCYEFGRALTKDKARLAAKGLAALIDGLWLRSALSEEPFSLAEAKKITDEYIDMQLNLCQDKQT.

The HTH tetR-type domain maps to 8–68; the sequence is SIRKQQLIQA…AAMRHIQYQL (61 aa). A DNA-binding region (H-T-H motif) is located at residues 31 to 50; the sequence is SIALIARKAGVSNGIISHYF.

Its pathway is amine and polyamine biosynthesis; betaine biosynthesis via choline pathway [regulation]. In terms of biological role, repressor involved in the biosynthesis of the osmoprotectant glycine betaine. It represses transcription of the choline transporter BetT and the genes of BetAB involved in the synthesis of glycine betaine. This Proteus mirabilis (strain HI4320) protein is HTH-type transcriptional regulator BetI.